The following is a 349-amino-acid chain: UPF0283 membrane protein Ent638_2153 (349 aa).

Helical transmembrane passes span 70–90 (MVTAGLTLFGISVVGQGVQWT), 99–119 (WVALGGCAAGALIIGAGVGSV), and 213–233 (ESTLMIAVSPLALVDMAFIAW).

The protein belongs to the UPF0283 family.

It localises to the cell inner membrane. This is UPF0283 membrane protein Ent638_2153 from Enterobacter sp. (strain 638).